We begin with the raw amino-acid sequence, 729 residues long: Catalase-peroxidase (729 aa).

The tract at residues 1–20 (MHNGSNGSVEQRDSMPETSR) is disordered. Basic and acidic residues predominate over residues 10 to 20 (EQRDSMPETSR). Positions 91–214 (WHAAGTYRTT…LGATVMGLIY (124 aa)) form a cross-link, tryptophyl-tyrosyl-methioninium (Trp-Tyr) (with M-240). The Proton acceptor role is filled by histidine 92. The segment at residues 214–240 (YVNPEGPESTPDPEWSAQRIRKSFGRM) is a cross-link (tryptophyl-tyrosyl-methioninium (Tyr-Met) (with W-91)). Histidine 255 is a binding site for heme b.

This sequence belongs to the peroxidase family. Peroxidase/catalase subfamily. As to quaternary structure, homodimer or homotetramer. Requires heme b as cofactor. Formation of the three residue Trp-Tyr-Met cross-link is important for the catalase, but not the peroxidase activity of the enzyme.

The enzyme catalyses H2O2 + AH2 = A + 2 H2O. It carries out the reaction 2 H2O2 = O2 + 2 H2O. Bifunctional enzyme with both catalase and broad-spectrum peroxidase activity. This Salinibacter ruber (strain DSM 13855 / M31) protein is Catalase-peroxidase.